The following is a 130-amino-acid chain: Small ribosomal subunit protein uS9 (130 aa).

Positions leucine 98–arginine 130 are disordered. A compositionally biased stretch (basic residues) spans lysine 111 to arginine 130.

Belongs to the universal ribosomal protein uS9 family.

This chain is Small ribosomal subunit protein uS9, found in Staphylococcus epidermidis (strain ATCC 35984 / DSM 28319 / BCRC 17069 / CCUG 31568 / BM 3577 / RP62A).